The following is a 474-amino-acid chain: Glutamate--tRNA ligase (474 aa).

Residues 18-28 (PSPTGFLHIGG) carry the 'HIGH' region motif. Positions 244 to 248 (KLSKR) match the 'KMSKS' region motif. K247 serves as a coordination point for ATP.

This sequence belongs to the class-I aminoacyl-tRNA synthetase family. Glutamate--tRNA ligase type 1 subfamily. As to quaternary structure, monomer.

Its subcellular location is the cytoplasm. It catalyses the reaction tRNA(Glu) + L-glutamate + ATP = L-glutamyl-tRNA(Glu) + AMP + diphosphate. Its function is as follows. Catalyzes the attachment of glutamate to tRNA(Glu) in a two-step reaction: glutamate is first activated by ATP to form Glu-AMP and then transferred to the acceptor end of tRNA(Glu). This chain is Glutamate--tRNA ligase, found in Caulobacter sp. (strain K31).